Reading from the N-terminus, the 210-residue chain is LexA repressor (210 aa).

A DNA-binding region (H-T-H motif) is located at residues 25–44 (AGQVAQEVGITKQAISQQVN). Residues Ser120 and Lys159 each act as for autocatalytic cleavage activity in the active site.

The protein belongs to the peptidase S24 family. Homodimer.

It catalyses the reaction Hydrolysis of Ala-|-Gly bond in repressor LexA.. Functionally, represses a number of genes involved in the response to DNA damage (SOS response), including recA and lexA. In the presence of single-stranded DNA, RecA interacts with LexA causing an autocatalytic cleavage which disrupts the DNA-binding part of LexA, leading to derepression of the SOS regulon and eventually DNA repair. The chain is LexA repressor from Deinococcus radiodurans (strain ATCC 13939 / DSM 20539 / JCM 16871 / CCUG 27074 / LMG 4051 / NBRC 15346 / NCIMB 9279 / VKM B-1422 / R1).